Consider the following 76-residue polypeptide: Putative defensin-like protein 184 (76 aa).

The first 21 residues, 1–21 (MKNSSILFVLIIVVFLISSSG), serve as a signal peptide directing secretion. 4 cysteine pairs are disulfide-bonded: Cys32–Cys76, Cys38–Cys58, Cys44–Cys70, and Cys48–Cys72.

This sequence belongs to the DEFL family.

The protein localises to the secreted. In Arabidopsis thaliana (Mouse-ear cress), this protein is Putative defensin-like protein 184 (LCR18).